Reading from the N-terminus, the 165-residue chain is Iron sulfur cluster assembly protein 1, mitochondrial (165 aa).

A mitochondrion-targeting transit peptide spans 1 to 27 (MLPVITRFARPALMAIRPVNAMGVLRA). Positions 132-136 (LPPVK) are SSQ1 binding region.

Belongs to the NifU family. Homodimer, but can exist as monomers or trimers. Oligomerization may be regulated by Zn(2+) availability. Component of the core Fe-S cluster (ISC) assembly machinery. Interacts with YFH1/frataxin with a 1 to 1 stoichiometry; the interaction is direct. Interacts with the mitochondrial co-chaperones JAC1 and SSQ1. Interacts with NFS1. Interacts with YAH1/ferredoxin; interacts with the reduced form. [2Fe-2S] cluster serves as cofactor. It depends on Zn(2+) as a cofactor.

Its subcellular location is the mitochondrion matrix. The protein operates within cofactor biosynthesis; iron-sulfur cluster biosynthesis. Its function is as follows. Scaffold protein for the de novo synthesis of iron-sulfur (Fe-S) clusters within mitochondria, which is required for maturation of both mitochondrial and cytoplasmic [2Fe-2S] and [4Fe-4S] proteins. First, a [2Fe-2S] cluster is transiently assembled on the scaffold proteins ISU1 and ISU2. In a second step, the cluster is released from ISU1/ISU2, transferred to glutaredoxin GRX5, followed by the formation of mitochondrial [2Fe-2S] proteins, the synthesis of [4Fe-4S] clusters and their target-specific insertion into the recipient apoproteins. Cluster assembly on ISU1/ISU2 depends on the function of the cysteine desulfurase complex NFS1-ISD11, which serves as the sulfur donor for cluster synthesis, the iron-binding protein frataxin (YFH1) as the putative iron donor, and the electron transfer chain comprised of ferredoxin reductase ARH1 and ferredoxin YAH1, which receive their electrons from NADH. Fe-S cluster release from ISU1/ISU2 is achieved by interaction with the Hsp70 chaperone SSQ1, assisted by the DnaJ-like co-chaperone JAC1 and the nucleotide exchange factor MGE1. ISU1 is the major isoform in yeast, while ISU2 is not detectable in cells grown to stationary phase. Also involved in production of a sulfur precursor required for thiolation of cytoplasmic tRNAs. The sequence is that of Iron sulfur cluster assembly protein 1, mitochondrial from Saccharomyces cerevisiae (strain ATCC 204508 / S288c) (Baker's yeast).